Here is a 210-residue protein sequence, read N- to C-terminus: Putative 4-hydroxy-4-methyl-2-oxoglutarate aldolase (210 aa).

Substrate contacts are provided by residues 87–90 and Arg-109; that span reads GDFV. Residue Asp-110 coordinates a divalent metal cation.

Belongs to the class II aldolase/RraA-like family. In terms of assembly, homotrimer. A divalent metal cation serves as cofactor.

It carries out the reaction 4-hydroxy-4-methyl-2-oxoglutarate = 2 pyruvate. It catalyses the reaction oxaloacetate + H(+) = pyruvate + CO2. Its function is as follows. Catalyzes the aldol cleavage of 4-hydroxy-4-methyl-2-oxoglutarate (HMG) into 2 molecules of pyruvate. Also contains a secondary oxaloacetate (OAA) decarboxylase activity due to the common pyruvate enolate transition state formed following C-C bond cleavage in the retro-aldol and decarboxylation reactions. In Halalkalibacterium halodurans (strain ATCC BAA-125 / DSM 18197 / FERM 7344 / JCM 9153 / C-125) (Bacillus halodurans), this protein is Putative 4-hydroxy-4-methyl-2-oxoglutarate aldolase.